We begin with the raw amino-acid sequence, 355 residues long: Phenylalanine--tRNA ligase alpha subunit (355 aa).

Glu273 is a binding site for Mg(2+).

It belongs to the class-II aminoacyl-tRNA synthetase family. Phe-tRNA synthetase alpha subunit type 1 subfamily. Tetramer of two alpha and two beta subunits. The cofactor is Mg(2+).

It is found in the cytoplasm. It carries out the reaction tRNA(Phe) + L-phenylalanine + ATP = L-phenylalanyl-tRNA(Phe) + AMP + diphosphate + H(+). The sequence is that of Phenylalanine--tRNA ligase alpha subunit from Bifidobacterium adolescentis (strain ATCC 15703 / DSM 20083 / NCTC 11814 / E194a).